The chain runs to 274 residues: Large ribosomal subunit protein uL2 (274 aa).

Residues 220-259 (VRGAAMNPRDHPHGGGEGRAPRGMSTPKTKWGKPARGVKT) are disordered. Positions 227–239 (PRDHPHGGGEGRA) are enriched in basic and acidic residues. The span at 249 to 259 (KWGKPARGVKT) shows a compositional bias: basic residues.

It belongs to the universal ribosomal protein uL2 family. In terms of assembly, part of the 50S ribosomal subunit. Forms a bridge to the 30S subunit in the 70S ribosome.

Its function is as follows. One of the primary rRNA binding proteins. Required for association of the 30S and 50S subunits to form the 70S ribosome, for tRNA binding and peptide bond formation. It has been suggested to have peptidyltransferase activity; this is somewhat controversial. Makes several contacts with the 16S rRNA in the 70S ribosome. The polypeptide is Large ribosomal subunit protein uL2 (Chloroflexus aggregans (strain MD-66 / DSM 9485)).